We begin with the raw amino-acid sequence, 541 residues long: Membrane protein insertase YidC (541 aa).

Residues 6–26 traverse the membrane as a helical segment; sequence SLLVLALIFISFLVYQQWQLD. Residues 34 to 56 form a disordered region; it reads EQTTSITATSDVPASSPSNSQAI. 4 consecutive transmembrane segments (helical) span residues 337-357, 416-436, 454-474, and 495-515; these read FWLL…IICV, LGGC…YWTF, LSAQ…MFLL, and PLIF…YWLV.

Belongs to the OXA1/ALB3/YidC family. Type 1 subfamily. Interacts with the Sec translocase complex via SecD. Specifically interacts with transmembrane segments of nascent integral membrane proteins during membrane integration.

The protein localises to the cell inner membrane. In terms of biological role, required for the insertion and/or proper folding and/or complex formation of integral membrane proteins into the membrane. Involved in integration of membrane proteins that insert both dependently and independently of the Sec translocase complex, as well as at least some lipoproteins. Aids folding of multispanning membrane proteins. The polypeptide is Membrane protein insertase YidC (Haemophilus influenzae (strain PittEE)).